Reading from the N-terminus, the 334-residue chain is N-acetyl-gamma-glutamyl-phosphate reductase (334 aa).

Residue Cys154 is part of the active site.

It belongs to the NAGSA dehydrogenase family. Type 1 subfamily.

The protein localises to the cytoplasm. It carries out the reaction N-acetyl-L-glutamate 5-semialdehyde + phosphate + NADP(+) = N-acetyl-L-glutamyl 5-phosphate + NADPH + H(+). It participates in amino-acid biosynthesis; L-arginine biosynthesis; N(2)-acetyl-L-ornithine from L-glutamate: step 3/4. Functionally, catalyzes the NADPH-dependent reduction of N-acetyl-5-glutamyl phosphate to yield N-acetyl-L-glutamate 5-semialdehyde. This chain is N-acetyl-gamma-glutamyl-phosphate reductase, found in Photorhabdus laumondii subsp. laumondii (strain DSM 15139 / CIP 105565 / TT01) (Photorhabdus luminescens subsp. laumondii).